The sequence spans 253 residues: Triosephosphate isomerase (253 aa).

A substrate-binding site is contributed by 8-10 (NWK). The active-site Electrophile is His-93. Glu-165 acts as the Proton acceptor in catalysis. Substrate-binding positions include Gly-171, Ser-210, and 231 to 232 (GG).

The protein belongs to the triosephosphate isomerase family. Homodimer.

The protein localises to the cytoplasm. The catalysed reaction is D-glyceraldehyde 3-phosphate = dihydroxyacetone phosphate. It functions in the pathway carbohydrate biosynthesis; gluconeogenesis. Its pathway is carbohydrate degradation; glycolysis; D-glyceraldehyde 3-phosphate from glycerone phosphate: step 1/1. Involved in the gluconeogenesis. Catalyzes stereospecifically the conversion of dihydroxyacetone phosphate (DHAP) to D-glyceraldehyde-3-phosphate (G3P). This chain is Triosephosphate isomerase, found in Francisella tularensis subsp. tularensis (strain FSC 198).